A 293-amino-acid chain; its full sequence is Small ribosomal subunit biogenesis GTPase RsgA (293 aa).

The region spanning 63-223 is the CP-type G domain; sequence QNELVRPPVA…VADTPGFSAL (161 aa). Residues 112–115 and 166–174 each bind GTP; these read SKID and GQSGVGKSS. Cysteine 247, cysteine 252, histidine 254, and cysteine 260 together coordinate Zn(2+).

The protein belongs to the TRAFAC class YlqF/YawG GTPase family. RsgA subfamily. Monomer. Associates with 30S ribosomal subunit, binds 16S rRNA. Zn(2+) is required as a cofactor.

It localises to the cytoplasm. In terms of biological role, one of several proteins that assist in the late maturation steps of the functional core of the 30S ribosomal subunit. Helps release RbfA from mature subunits. May play a role in the assembly of ribosomal proteins into the subunit. Circularly permuted GTPase that catalyzes slow GTP hydrolysis, GTPase activity is stimulated by the 30S ribosomal subunit. This chain is Small ribosomal subunit biogenesis GTPase RsgA, found in Geobacillus thermodenitrificans (strain NG80-2).